A 763-amino-acid chain; its full sequence is Formin-like protein 4 (763 aa).

Positions 1–33 (MAAMLMQPWPPFLPHLTLVFLTLILFFPNQSFS) are cleaved as a signal peptide. The interval 52-73 (PPVQSPVLSPPQNPSSSSSDSD) is disordered. Residues 80–100 (AVLITAASTLLVAAVFFFLVH) traverse the membrane as a helical segment. Disordered regions lie at residues 185–327 (IYSK…DSDH) and 726–763 (RSSM…DSDM). Over residues 205 to 225 (RSSTSHSVIHNDNYRNATTTH) the composition is skewed to polar residues. A compositionally biased stretch (basic and acidic residues) spans 229–238 (VKTDSFEFVK). Residues 240 to 280 (DPTPPPPPPPPIPVKQSATPPPPPPPKLKNNGPSPPPPPPL) show a composition bias toward pro residues. Positions 281–292 (KKTAALSSSASK) are enriched in low complexity. Positions 303-738 (SGESSNGQVK…MGSTQQRNAV (436 aa)) constitute an FH2 domain. Residues 316–327 (LHWDKVNPDSDH) are compositionally biased toward basic and acidic residues. Polar residues predominate over residues 726-736 (RSSMGSTQQRN).

The protein belongs to the formin-like family. Class-I subfamily. In terms of assembly, interacts with profilin. Expressed in the whole plant (at protein level).

Its subcellular location is the cell membrane. Its function is as follows. Might be involved in the organization and polarity of the actin cytoskeleton. This chain is Formin-like protein 4 (FH4), found in Arabidopsis thaliana (Mouse-ear cress).